The following is a 116-amino-acid chain: Non-specific lipid-transfer protein (116 aa).

Positions 1–25 are cleaved as a signal peptide; that stretch reads MAKMAMMVLCAGVTCMVVGAPYTEA. Intrachain disulfides connect cysteine 28-cysteine 75, cysteine 38-cysteine 52, cysteine 53-cysteine 98, and cysteine 73-cysteine 112.

Belongs to the plant LTP family.

Plant non-specific lipid-transfer proteins transfer phospholipids as well as galactolipids across membranes. May play a role in wax or cutin deposition in the cell walls of expanding epidermal cells and certain secretory tissues. The chain is Non-specific lipid-transfer protein from Helianthus annuus (Common sunflower).